A 157-amino-acid polypeptide reads, in one-letter code: SsrA-binding protein (157 aa).

Belongs to the SmpB family.

The protein localises to the cytoplasm. In terms of biological role, required for rescue of stalled ribosomes mediated by trans-translation. Binds to transfer-messenger RNA (tmRNA), required for stable association of tmRNA with ribosomes. tmRNA and SmpB together mimic tRNA shape, replacing the anticodon stem-loop with SmpB. tmRNA is encoded by the ssrA gene; the 2 termini fold to resemble tRNA(Ala) and it encodes a 'tag peptide', a short internal open reading frame. During trans-translation Ala-aminoacylated tmRNA acts like a tRNA, entering the A-site of stalled ribosomes, displacing the stalled mRNA. The ribosome then switches to translate the ORF on the tmRNA; the nascent peptide is terminated with the 'tag peptide' encoded by the tmRNA and targeted for degradation. The ribosome is freed to recommence translation, which seems to be the essential function of trans-translation. This chain is SsrA-binding protein, found in Christiangramia forsetii (strain DSM 17595 / CGMCC 1.15422 / KT0803) (Gramella forsetii).